A 128-amino-acid polypeptide reads, in one-letter code: LIM domain-containing protein 2 (128 aa).

At methionine 1 the chain carries N-acetylmethionine. The tract at residues 1 to 25 (MFQAAGAAQATPSHEAKGSSGSSTV) is disordered. In terms of domain architecture, LIM zinc-binding spans 39–99 (ETCAACQKTV…RPHFQQLFKS (61 aa)). The Zn(2+) site is built by cysteine 41, cysteine 44, histidine 62, cysteine 65, cysteine 68, cysteine 71, cysteine 89, and histidine 92.

In terms of assembly, interacts with ILK.

The protein localises to the cytoplasm. Its subcellular location is the nucleus. Its function is as follows. Acts as an activator of the protein-kinase ILK, thereby regulating cell motility. The polypeptide is LIM domain-containing protein 2 (Mus musculus (Mouse)).